An 88-amino-acid polypeptide reads, in one-letter code: Synaptonemal complex central element protein 3 (88 aa).

The stretch at Glu-7–Lys-75 forms a coiled coil.

In terms of assembly, homodimer. Can form higher-order homooligomers. Interacts with SYCP1 (via tetrameric core); the interaction remodels SYCP1 homotetramers to 2:1 heterotrimers with SYCE3. SYCP1/SYCE3 heterotrimers form lattice assemblies as part of the mature synaptonemal complex via both lateral and head-to-head interactions. Interacts with the SYCE1-SIX6OS1 complex; the interaction recruits the SYCE1-SIX6OS1 complex to the central element of the synaptonemal complex. Interacts with the SYCE2-TEX12 complex; the interaction promotes fibrous assembly of SYCE2-TEX12 as part of the synaptonemal complex central element. Interacts with SYCE1. Interacts with SYCE2. Interacts with proteasome subunit PSMA8; to participate in meiosis progression during spermatogenesis. Interacts with SPO16.

It is found in the nucleus. The protein localises to the chromosome. Major component of the transverse central element of synaptonemal complexes (SCS), formed between homologous chromosomes during meiotic prophase. Required for the assembly of the central element of the synaptonemal complex during meiosis, via remodeling of SYCP1 lattice structures and promoting recruitment of SYCE2-TEX12 and SYCE1-SIX60S1 complexes. Required for chromosome loading of the central element-specific SCS proteins, and for initiating synapsis between homologous chromosomes. Chromosome loading appears to require SYCP1. Required for fertility and normal testis development. The protein is Synaptonemal complex central element protein 3 of Homo sapiens (Human).